The following is a 659-amino-acid chain: Protein phosphatase Slingshot homolog 3 (659 aa).

The span at 1–16 (MALVTVSRSPPGSGAS) shows a compositional bias: polar residues. The segment at 1–31 (MALVTVSRSPPGSGASTPVGPWDQAVQRRSR) is disordered. Residue A2 is modified to N-acetylalanine. Residues S9 and S37 each carry the phosphoserine modification. Positions 46–96 (LGLQDGGDNDDAAEASSEPTEKAPSEEELHGDQTDFGQGSQSPQKQEEQRQ) are disordered. Positions 64 to 78 (PTEKAPSEEELHGDQ) are enriched in basic and acidic residues. Positions 80–89 (DFGQGSQSPQ) are enriched in polar residues. Phosphoserine occurs at positions 85 and 87. The 56-residue stretch at 269–324 (EQMEQAIRAELWKVLDVSDLESVTSKEIRQALELRLGLPLQQYRDFIDNQMLLLVA) folds into the DEK-C domain. Residues 328 to 469 (RASRIFPHLY…LQIYQGILTA (142 aa)) form the Tyrosine-protein phosphatase domain. C413 functions as the Phosphocysteine intermediate in the catalytic mechanism. Disordered stretches follow at residues 482 to 534 (GVSP…RINL), 547 to 603 (SLEL…RQSV), and 617 to 638 (QAFQEQEQGQGQGQGEPCISST). Residues 547-557 (SLELESTSETS) show a composition bias toward low complexity.

It belongs to the protein-tyrosine phosphatase family. Does not bind to, or colocalize with, filamentous actin.

It localises to the cytoplasm. Its subcellular location is the cytoskeleton. It is found in the nucleus. The enzyme catalyses O-phospho-L-tyrosyl-[protein] + H2O = L-tyrosyl-[protein] + phosphate. The catalysed reaction is O-phospho-L-seryl-[protein] + H2O = L-seryl-[protein] + phosphate. It carries out the reaction O-phospho-L-threonyl-[protein] + H2O = L-threonyl-[protein] + phosphate. In terms of biological role, protein phosphatase which may play a role in the regulation of actin filament dynamics. Can dephosphorylate and activate the actin binding/depolymerizing factor cofilin, which subsequently binds to actin filaments and stimulates their disassembly. The polypeptide is Protein phosphatase Slingshot homolog 3 (SSH3) (Homo sapiens (Human)).